The following is a 93-amino-acid chain: Large ribosomal subunit protein uL23cz/uL23cy (93 aa).

Belongs to the universal ribosomal protein uL23 family. As to quaternary structure, part of the 50S ribosomal subunit.

It is found in the plastid. It localises to the chloroplast. In terms of biological role, binds to 23S rRNA. The sequence is that of Large ribosomal subunit protein uL23cz/uL23cy (rpl23-A) from Jasminum nudiflorum (Winter jasmine).